We begin with the raw amino-acid sequence, 367 residues long: Folliculin-like protein bhd1 (367 aa).

2 disordered regions span residues 41 to 75 (RSIG…QSST) and 92 to 115 (SKGP…SPIS). Basic and acidic residues predominate over residues 54-64 (EAFKNELDNRN). Composition is skewed to polar residues over residues 65–75 (NADSQSLQSST) and 99–115 (RVNS…SPIS). A uDENN FLCN/SMCR8-type domain is found at 131-302 (FSVPDVQPRL…SNIGTAPSYE (172 aa)).

This sequence belongs to the folliculin family.

The protein localises to the nucleus. It localises to the cytoplasm. The polypeptide is Folliculin-like protein bhd1 (bhd1) (Schizosaccharomyces pombe (strain 972 / ATCC 24843) (Fission yeast)).